Reading from the N-terminus, the 210-residue chain is Thymidylate kinase (210 aa).

Residue 10–17 (GPEGAGKS) coordinates ATP.

It belongs to the thymidylate kinase family.

It catalyses the reaction dTMP + ATP = dTDP + ADP. Phosphorylation of dTMP to form dTDP in both de novo and salvage pathways of dTTP synthesis. The protein is Thymidylate kinase of Pseudomonas syringae pv. tomato (strain ATCC BAA-871 / DC3000).